We begin with the raw amino-acid sequence, 536 residues long: G-protein coupled receptor Mth2 (536 aa).

The Extracellular segment spans residues 1-210 (MAERDHYHTI…DDNSTVKIIN (210 aa)). 5 disulfides stabilise this stretch: Cys17–Cys71, Cys73–Cys78, Cys82–Cys177, Cys83–Cys96, and Cys138–Cys197. Asn24 and Asn33 each carry an N-linked (GlcNAc...) asparagine glycan. N-linked (GlcNAc...) asparagine glycosylation is found at Asn103, Asn113, Asn118, Asn159, Asn184, and Asn203. A helical membrane pass occupies residues 211 to 231 (AYAMMFSIPFMMLTIAVYLLI). Residues 232 to 241 (PELRNQHGKS) lie on the Cytoplasmic side of the membrane. A helical membrane pass occupies residues 242-262 (LVCYLVGLTVGYTSLCYVQLY). At 263–273 (QVDATGDACKV) the chain is on the extracellular side. The chain crosses the membrane as a helical span at residues 274 to 294 (FGYTAYFFFMGAYMWLSVISF). The Cytoplasmic segment spans residues 295–314 (DLWHNFRGTRGINRFQEKKR). Residues 315 to 335 (FLFYSLYSWGIAVVFLAFTYI) form a helical membrane-spanning segment. Residues 336 to 365 (AQELTNLPAYLKPGIGDGVYCWLDMSNWAA) lie on the Extracellular side of the membrane. Residues 366–386 (MIYFYGPILVIVVANTIMFIM) form a helical membrane-spanning segment. The Cytoplasmic segment spans residues 387–417 (TAIKIHGVQREMARIIASENSTKNLRTEKDK). A helical transmembrane segment spans residues 418 to 438 (FGLFLRLFLIMGITWLTELIS). The Extracellular segment spans residues 439–449 (YFVGSDKGWSK). A helical membrane pass occupies residues 450–470 (LFYISDLANAMQGFLIFMLFV). At 471 to 536 (MKKKVKHLIT…VDPQKTTIFR (66 aa)) the chain is on the cytoplasmic side. The disordered stretch occupies residues 487–506 (RDGSNQRQSQYSTKTTSSSV). A compositionally biased stretch (low complexity) spans 492 to 505 (QRQSQYSTKTTSSS).

This sequence belongs to the G-protein coupled receptor 2 family. Mth subfamily. In terms of assembly, homodimer.

It localises to the cell membrane. In terms of biological role, involved in biological aging and stress response. Essential for adult survival. This chain is G-protein coupled receptor Mth2 (mth2), found in Drosophila yakuba (Fruit fly).